The following is a 262-amino-acid chain: MTLLAIGIEYQGTAYCGWQHQKHCDSVQQQLEKALSYIADEPIGLNCAGRTDTGVHAIGQIAHFETNASRPDKAWIQGVNTQLPNDIRVTWVKPMPEDFHARFSAVARQYRYVIFNRPVHSAILANRVTWENRPLDVKKMHAAAQDLLGENDFSSFRAAGCQASHANRNVQYLQVSRQGNFVFVDIQANAFLHHMVRNIVGTLLEVGRLDKPVEWVSELLKKQDRTQAGMTAPAAGLYFVNALYPESFELPRVVLDELLWQA.

Aspartate 52 (nucleophile) is an active-site residue. Tyrosine 110 is a substrate binding site.

This sequence belongs to the tRNA pseudouridine synthase TruA family. In terms of assembly, homodimer.

The enzyme catalyses uridine(38/39/40) in tRNA = pseudouridine(38/39/40) in tRNA. Formation of pseudouridine at positions 38, 39 and 40 in the anticodon stem and loop of transfer RNAs. This chain is tRNA pseudouridine synthase A, found in Hydrogenovibrio crunogenus (strain DSM 25203 / XCL-2) (Thiomicrospira crunogena).